The sequence spans 294 residues: 33 kDa chaperonin (294 aa).

2 disulfide bridges follow: Cys-239/Cys-241 and Cys-272/Cys-275.

Belongs to the HSP33 family. Post-translationally, under oxidizing conditions two disulfide bonds are formed involving the reactive cysteines. Under reducing conditions zinc is bound to the reactive cysteines and the protein is inactive.

The protein resides in the cytoplasm. Redox regulated molecular chaperone. Protects both thermally unfolding and oxidatively damaged proteins from irreversible aggregation. Plays an important role in the bacterial defense system toward oxidative stress. The protein is 33 kDa chaperonin of Listeria monocytogenes serovar 1/2a (strain ATCC BAA-679 / EGD-e).